A 377-amino-acid polypeptide reads, in one-letter code: Palmitoyltransferase ZDHHC16 (377 aa).

At 1-77 the chain is on the cytoplasmic side; it reads MRGQRSLLLG…VYWLVDNVIR (77 aa). A helical transmembrane segment spans residues 78-98; the sequence is WFGVVFVVLVIVLTGSIVAIA. Over 99-116 the chain is Lumenal; the sequence is YLCVLPLILRTYSVPRLC. A helical membrane pass occupies residues 117-137; that stretch reads WHFFYSHWNLILIVFHYYQAI. The Cytoplasmic portion of the chain corresponds to 138 to 198; the sequence is TTPPGYPPQG…NNCVGHYNHR (61 aa). One can recognise a DHHC domain in the interval 155 to 205; it reads SICKKCIYPKPARTHHCSICNRCVLKMDHHCPWLNNCVGHYNHRYFFSFCF. Catalysis depends on C185, which acts as the S-palmitoyl cysteine intermediate. Residues 199–219 traverse the membrane as a helical segment; that stretch reads YFFSFCFFMTLGCVYCSYGSW. The Lumenal portion of the chain corresponds to 220 to 266; sequence DLFREAYAAIEKMKQLDKNKLQAVANQTYHQTPPPTFSFRERMTHKS. The chain crosses the membrane as a helical span at residues 267-287; the sequence is LVYLWFLCSSVALALGALTVW. The Cytoplasmic segment spans residues 288–377; the sequence is HAVLISRGET…TAHSASVMAV (90 aa).

Belongs to the DHHC palmitoyltransferase family. As to quaternary structure, interacts with ABL1. Interacts with COPS5/JAB1. As to expression, widely expressed.

Its subcellular location is the endoplasmic reticulum membrane. It carries out the reaction L-cysteinyl-[protein] + hexadecanoyl-CoA = S-hexadecanoyl-L-cysteinyl-[protein] + CoA. Functionally, palmitoyl acyltransferase that mediates palmitoylation of proteins such as PLN and ZDHHC6. Required during embryonic heart development and cardiac function, possibly by mediating palmitoylation of PLN, thereby affecting PLN phosphorylation and homooligomerization. Also required for eye development. Palmitoylates ZDHHC6, affecting the quaternary assembly of ZDHHC6, its localization, stability and function. May play a role in DNA damage response. May be involved in apoptosis regulation. Involved in the proliferation of neural stem cells by regulating the FGF/ERK pathway. The sequence is that of Palmitoyltransferase ZDHHC16 from Homo sapiens (Human).